The following is a 394-amino-acid chain: MQPRRIAILGSTGSIGTQAIDVVDGAPHLFEVVALSAGGGNLALLARQAVHTGAAAVGIAAGDPRELAVLIDEAAAAAGRSGYRPEIIAGPDASTRIAGLDADVVLNGITGSIGLAPTLAALKSGATLALANKESLIVGGSLVKAAARDGQIVPVDSEHSAIAQCLRSGSAAEVDKLVLTASGGPFRGRSGEELHGVTPQEALAHPTWDMGLMVTTNSATLVNKGLEVIEAHLLFDIPLDRIDVVVHPQSVVHSMVQFVDGSTIAQASPPDMRLPIALGLGWPGRVPNAAAPCDWTKAATWTFEPLDATAFPAVDLAKDAAKQGSTFPAVFNAANEEAVTAFHGGRIRFTDIVDTVDAVLSEHTGSSRLTVESVLDAESWARARAHERLAVSSL.

Residues T12, G13, S14, I15, G38, N41, and N132 each coordinate NADPH. K133 serves as a coordination point for 1-deoxy-D-xylulose 5-phosphate. An NADPH-binding site is contributed by E134. D156 contributes to the Mn(2+) binding site. 1-deoxy-D-xylulose 5-phosphate-binding residues include S157, E158, S182, and H205. Mn(2+) is bound at residue E158. Residue G211 coordinates NADPH. S218, N223, K224, and E227 together coordinate 1-deoxy-D-xylulose 5-phosphate. E227 lines the Mn(2+) pocket.

This sequence belongs to the DXR family. Mg(2+) is required as a cofactor. The cofactor is Mn(2+).

The enzyme catalyses 2-C-methyl-D-erythritol 4-phosphate + NADP(+) = 1-deoxy-D-xylulose 5-phosphate + NADPH + H(+). Its pathway is isoprenoid biosynthesis; isopentenyl diphosphate biosynthesis via DXP pathway; isopentenyl diphosphate from 1-deoxy-D-xylulose 5-phosphate: step 1/6. Catalyzes the NADPH-dependent rearrangement and reduction of 1-deoxy-D-xylulose-5-phosphate (DXP) to 2-C-methyl-D-erythritol 4-phosphate (MEP). The polypeptide is 1-deoxy-D-xylulose 5-phosphate reductoisomerase (Pseudarthrobacter chlorophenolicus (strain ATCC 700700 / DSM 12829 / CIP 107037 / JCM 12360 / KCTC 9906 / NCIMB 13794 / A6) (Arthrobacter chlorophenolicus)).